Here is a 1508-residue protein sequence, read N- to C-terminus: MRRNDLKPFYLAGMLELCLLAAPAAHAQTSATRQLVEQGNYWHDQGRDDLAADTWKKLLGIDPDQPDALLGLAQIDLAQGRQSEARKRLQQLEGAHPQSPQAQRLRVAIGARGSSSAGEDSNLRNARRAASAGRYVEAARSYEAAFAGKPPPPNLALEYYQSLAGTPTGWERARDGLRRLQSSDPDNPSVQLALAQVLSYREPTRRDGIAQLRTLAQRADVGGPARSSWRQALLWLNAGMADAPLYQAFLAGTPNDAEVTAKLGQLRAQRTTATTPADPNGVLLGEGFRALSANNLSAAEQRFTQVLRARARDPEALGGLGSVRLRQQRFAEAQELLRPAAAGNGKWRNALESARYWQQLQQAETARARGDLAQARQLIEQAVQLLPNEPAGHVALGDLQAAGDPVAAEASYRKALARDADNAGALQGLVGLYSRQGRLQEASALFDRLPAAERAKSGGQALLRSNVQRARARQFLDAGDAVSAQTELEAAMVERPGDAWIRLDLARLYQQAGRPDQARSVMDGLLAVHGDQPEALHANALLAQESGDWQGAYDSLDRIPAAARTPAMTQLRATAWIELQARQARQLVAQGRVGEAQQLLARTDTALGNQLDDPQLLAALAGAHADAGNTQRALVLAQRLVTGASPRIEDRLQYASVLLRAHQDAELSAVLRQLQATTMTPEQLRRYQGLRSAYTLRQVDALRELGNLEGAYDALSPVLAQQPGNRDAQAALARLYAAAGEHRQALAIYQQILQRQPSDLDTLTAAANSAAAQSDLRDAERYLQRALAQAPESPDVLAAAGRVYRSAGKNRKAEQYFRAALAAQQRQAGQLDNGLASARGLAAVAASGRPLNPFSGMTGAMPRSPAMLSERMAAGSAYNDVATAPVAYIAPLAMQPGAARVATAAPVNAAADLSSDALPQPVRASTVPSTLPAPSRLRASTHGALPAVSGSDLQPRNIAAQALSARSSGNSVLDELRAVQAENSDGLAGGALYRARDGEDGLGRLDDIEMPVQAEFAVGEGKLGVTLTPTVVDAGTLGTDYATASRFGTGPQSAIGDALAANRGPIDTLVDSPVYQLLATEGDTAATRERLRRYALNTGLFNALLVENNNSTAAALAALANEPLPAYLLSINASNTPIGQLARDILGNAALSEQLGAGDAAALRALAGSTAAAQQTPTGLADTLNAMAASGNGSRRLSQDDTGVGVGVRYRNGGFSAELGSTPIGFQEQNLIGGVGYRGELGDTVSWSAEASRRAVTDSVLSFAGAQDARSGRQWGGVTSTGLSLSATADNGLLGGYANLAAHRLQGNNVADNDHRQVDLGFYVHALETEHQSLTAGVNLTTMQYDKNLSGFTYGHGGYFSPQDYVDLGFPVHWSGRTAGQTVNWKVDASVGVQHFSTEASPYFPTDPTLQQAAYDAASLAALLGLVDRYTDPVYASESRTGVSYNLSGAAEWQVAPQLFLGGRLTFNNARDYNQFSSNLYLRFVMDRLGAALGRAPQVLASPYAAEH.

The N-terminal stretch at methionine 1–alanine 27 is a signal peptide. TPR repeat units lie at residues threonine 32–glutamine 65, glutamate 119–proline 152, proline 314–tryptophan 347, alanine 354–glutamate 389, alanine 391–asparagine 422, alanine 423–lysine 456, alanine 499–glutamine 532, serine 692–asparagine 725, arginine 726–aspartate 759, aspartate 761–serine 793, and proline 794–glutamine 827.

The protein belongs to the AcsC/BcsC family.

Its pathway is glycan metabolism; bacterial cellulose biosynthesis. Its function is as follows. Required for maximal bacterial cellulose synthesis. This is Cellulose synthase operon protein C (bcsC) from Xanthomonas axonopodis pv. citri (strain 306).